The sequence spans 416 residues: Glutamyl-tRNA reductase (416 aa).

Residues 49–52 (TCNR), S105, 110–112 (EPQ), and Q116 each bind substrate. The Nucleophile role is filled by C50. 185-190 (GAGETI) is a binding site for NADP(+).

This sequence belongs to the glutamyl-tRNA reductase family. Homodimer.

It catalyses the reaction (S)-4-amino-5-oxopentanoate + tRNA(Glu) + NADP(+) = L-glutamyl-tRNA(Glu) + NADPH + H(+). It participates in porphyrin-containing compound metabolism; protoporphyrin-IX biosynthesis; 5-aminolevulinate from L-glutamyl-tRNA(Glu): step 1/2. Functionally, catalyzes the NADPH-dependent reduction of glutamyl-tRNA(Glu) to glutamate 1-semialdehyde (GSA). The polypeptide is Glutamyl-tRNA reductase (Shewanella denitrificans (strain OS217 / ATCC BAA-1090 / DSM 15013)).